The chain runs to 455 residues: Polyadenylation factor subunit 2 (455 aa).

7 WD repeats span residues 80–119 (KVKH…FETI), 122–162 (AHDT…KELD), 164–203 (IHTE…QERV), 206–245 (GHHW…CVST), 248–288 (KFKH…NELM), 291–331 (RDEV…EKPI), and 337–376 (AHEK…DPNA). 2 disordered regions span residues 406–425 (EYGA…TQYN) and 430–455 (RVPE…GLSI). A compositionally biased stretch (basic and acidic residues) spans 432–446 (PEIKEPTPTTDKEQR).

It localises to the nucleus. Its function is as follows. Required for 3'-end cleavage and polyadenylation of pre-mRNAs. Also involved in chromosome segregation where it has a role in chromosome attachment to the mitotic spindle. The chain is Polyadenylation factor subunit 2 (PFS2) from Candida glabrata (strain ATCC 2001 / BCRC 20586 / JCM 3761 / NBRC 0622 / NRRL Y-65 / CBS 138) (Yeast).